The sequence spans 155 residues: Ribonuclease H (155 aa).

The region spanning 1 to 142 is the RNase H type-1 domain; it reads MLKQVEIFTD…CDVLARDAAS (142 aa). Mg(2+)-binding residues include Asp-10, Glu-48, Asp-70, and Asp-134.

It belongs to the RNase H family. In terms of assembly, monomer. The cofactor is Mg(2+).

It localises to the cytoplasm. It carries out the reaction Endonucleolytic cleavage to 5'-phosphomonoester.. Functionally, endonuclease that specifically degrades the RNA of RNA-DNA hybrids. The protein is Ribonuclease H of Serratia proteamaculans (strain 568).